The sequence spans 488 residues: Glutamyl-tRNA(Gln) amidotransferase subunit A (488 aa).

Active-site charge relay system residues include lysine 79 and serine 159. Serine 183 serves as the catalytic Acyl-ester intermediate.

It belongs to the amidase family. GatA subfamily. Heterotrimer of A, B and C subunits.

The catalysed reaction is L-glutamyl-tRNA(Gln) + L-glutamine + ATP + H2O = L-glutaminyl-tRNA(Gln) + L-glutamate + ADP + phosphate + H(+). Its function is as follows. Allows the formation of correctly charged Gln-tRNA(Gln) through the transamidation of misacylated Glu-tRNA(Gln) in organisms which lack glutaminyl-tRNA synthetase. The reaction takes place in the presence of glutamine and ATP through an activated gamma-phospho-Glu-tRNA(Gln). This chain is Glutamyl-tRNA(Gln) amidotransferase subunit A, found in Wolbachia pipientis subsp. Culex pipiens (strain wPip).